The chain runs to 289 residues: Elongation factor Ts (289 aa).

The tract at residues 80–83 (TDFV) is involved in Mg(2+) ion dislocation from EF-Tu.

It belongs to the EF-Ts family.

It is found in the cytoplasm. In terms of biological role, associates with the EF-Tu.GDP complex and induces the exchange of GDP to GTP. It remains bound to the aminoacyl-tRNA.EF-Tu.GTP complex up to the GTP hydrolysis stage on the ribosome. The polypeptide is Elongation factor Ts (Francisella tularensis subsp. tularensis (strain FSC 198)).